Consider the following 326-residue polypeptide: Beta-ketoacyl-[acyl-carrier-protein] synthase III (326 aa).

Residues Cys112 and His251 contribute to the active site. Residues 252–256 (QANSR) are ACP-binding. Asn281 is a catalytic residue.

The protein belongs to the thiolase-like superfamily. FabH family. In terms of assembly, homodimer.

Its subcellular location is the cytoplasm. It catalyses the reaction malonyl-[ACP] + acetyl-CoA + H(+) = 3-oxobutanoyl-[ACP] + CO2 + CoA. It functions in the pathway lipid metabolism; fatty acid biosynthesis. Functionally, catalyzes the condensation reaction of fatty acid synthesis by the addition to an acyl acceptor of two carbons from malonyl-ACP. Catalyzes the first condensation reaction which initiates fatty acid synthesis and may therefore play a role in governing the total rate of fatty acid production. Possesses both acetoacetyl-ACP synthase and acetyl transacylase activities. Its substrate specificity determines the biosynthesis of branched-chain and/or straight-chain of fatty acids. The protein is Beta-ketoacyl-[acyl-carrier-protein] synthase III of Clostridium botulinum (strain 657 / Type Ba4).